Consider the following 506-residue polypeptide: Glycerol kinase (506 aa).

T12 provides a ligand contact to ADP. Positions 12, 13, and 14 each coordinate ATP. Residue T12 coordinates sn-glycerol 3-phosphate. ADP is bound at residue R16. Residues R82, E83, Y134, and D246 each contribute to the sn-glycerol 3-phosphate site. Residues R82, E83, Y134, D246, and Q247 each contribute to the glycerol site. The ADP site is built by T268 and G312. Positions 268, 312, 316, and 413 each coordinate ATP. Positions 413 and 417 each coordinate ADP.

It belongs to the FGGY kinase family.

It carries out the reaction glycerol + ATP = sn-glycerol 3-phosphate + ADP + H(+). It participates in polyol metabolism; glycerol degradation via glycerol kinase pathway; sn-glycerol 3-phosphate from glycerol: step 1/1. Inhibited by fructose 1,6-bisphosphate (FBP). In terms of biological role, key enzyme in the regulation of glycerol uptake and metabolism. Catalyzes the phosphorylation of glycerol to yield sn-glycerol 3-phosphate. This Leifsonia xyli subsp. xyli (strain CTCB07) protein is Glycerol kinase.